Consider the following 353-residue polypeptide: Inositol-tetrakisphosphate 1-kinase 3 (353 aa).

A disordered region spans residues 1-25; the sequence is MKLTDNEEITMNGTREMETTEQETS. 1D-myo-inositol 1,3,4-trisphosphate-binding residues include K50 and K92. Positions 127 and 177 each coordinate ATP. The 213-residue stretch at 138–350 folds into the ATP-grasp domain; the sequence is NLSDSNGRVG…QSQCKKRALA (213 aa). 1D-myo-inositol 1,3,4-trisphosphate is bound by residues H188 and K220. Residues 209 to 220 and S235 contribute to the ATP site; that span reads QEFVNHGGVLFK. Mg(2+)-binding residues include D300, D315, and N317. N317 contacts 1D-myo-inositol 1,3,4-trisphosphate.

The protein belongs to the ITPK1 family. Monomer. The cofactor is Mg(2+). As to expression, highly expressed in leaves and flowers, and at lower levels in roots, stems, cauline leaves and siliques.

It catalyses the reaction 1D-myo-inositol 3,4,5,6-tetrakisphosphate + ATP = 1D-myo-inositol 1,3,4,5,6-pentakisphosphate + ADP + H(+). The catalysed reaction is 1D-myo-inositol 1,3,4-trisphosphate + ATP = 1D-myo-inositol 1,3,4,5-tetrakisphosphate + ADP + H(+). The enzyme catalyses 1D-myo-inositol 1,3,4-trisphosphate + ATP = 1D-myo-inositol 1,3,4,6-tetrakisphosphate + ADP + H(+). In terms of biological role, kinase that can phosphorylate various inositol polyphosphate such as Ins(3,4,5,6)P4 or Ins(1,3,4)P3. Phosphorylates Ins(3,4,5,6)P4 to form InsP5. This reaction is thought to have regulatory importance, since Ins(3,4,5,6)P4 is an inhibitor of plasma membrane Ca(2+)-activated Cl(-) channels, while Ins(1,3,4,5,6)P5 is not. Also phosphorylates Ins(1,3,4)P3 or a racemic mixture of Ins(1,4,6)P3 and Ins(3,4,6)P3 to form InsP4. Ins(1,3,4,6)P4 is an essential molecule in the hexakisphosphate (InsP6) pathway. This chain is Inositol-tetrakisphosphate 1-kinase 3 (ITPK3), found in Arabidopsis thaliana (Mouse-ear cress).